The primary structure comprises 95 residues: 1,2-phenylacetyl-CoA epoxidase, subunit B (95 aa).

Homotrimer. Forms a stable heterodimer with PaaC. Probably forms an oligomer with PaaAC.

It participates in aromatic compound metabolism; phenylacetate degradation. Component of 1,2-phenylacetyl-CoA epoxidase multicomponent enzyme system which catalyzes the reduction of phenylacetyl-CoA (PA-CoA) to form 1,2-epoxyphenylacetyl-CoA. The subunit B may play a regulatory role or be directly involved in electron transport. The polypeptide is 1,2-phenylacetyl-CoA epoxidase, subunit B (paaB) (Escherichia coli (strain K12)).